A 123-amino-acid chain; its full sequence is Protein LLP homolog (123 aa).

Residues 1-21 (MAKSIRSKWKRKMRAEKRKKN) are compositionally biased toward basic residues. Disordered stretches follow at residues 1–23 (MAKSIRSKWKRKMRAEKRKKNAP) and 55–123 (KINE…KLAW). Residues 70 to 89 (DSSKMDMELKRNKKNLRDQH) show a composition bias toward basic and acidic residues. Residues 100–123 (QQKKLKSQCGKKKGKSKQAKKLAW) are compositionally biased toward basic residues.

It belongs to the learning-associated protein family.

Its subcellular location is the nucleus. The protein localises to the nucleolus. The protein resides in the chromosome. Regulates dendritic and spine growth and synaptic transmission. This chain is Protein LLP homolog (llph), found in Xenopus tropicalis (Western clawed frog).